The primary structure comprises 120 residues: UPF0231 protein YacL (120 aa).

Belongs to the UPF0231 family.

This Escherichia coli O81 (strain ED1a) protein is UPF0231 protein YacL.